A 467-amino-acid polypeptide reads, in one-letter code: Probable serine hydroxymethyltransferase, cytosolic (467 aa).

Lysine 243 is modified (N6-(pyridoxal phosphate)lysine).

It belongs to the SHMT family. Homotetramer. Pyridoxal 5'-phosphate serves as cofactor.

The protein resides in the cytoplasm. The enzyme catalyses (6R)-5,10-methylene-5,6,7,8-tetrahydrofolate + glycine + H2O = (6S)-5,6,7,8-tetrahydrofolate + L-serine. Its pathway is one-carbon metabolism; tetrahydrofolate interconversion. Interconversion of serine and glycine. The sequence is that of Probable serine hydroxymethyltransferase, cytosolic from Schizosaccharomyces pombe (strain 972 / ATCC 24843) (Fission yeast).